The following is an 87-amino-acid chain: MVNMKASMFLTFAGLVLLFVVCYASESEEKEFPKEMLSSIFAVDNDFKQEERNCAGYMRECKEKLCCSGYVCSSRWKWCVLPAPWRR.

Residues 1–24 (MVNMKASMFLTFAGLVLLFVVCYA) form the signal peptide. Residues 25-52 (SESEEKEFPKEMLSSIFAVDNDFKQEER) constitute a propeptide that is removed on maturation. 3 disulfides stabilise this stretch: cysteine 54/cysteine 67, cysteine 61/cysteine 72, and cysteine 66/cysteine 79.

This sequence belongs to the neurotoxin 10 (Hwtx-1) family. 51 (Hntx-8) subfamily. Hntx-8 sub-subfamily. As to expression, expressed by the venom gland.

The protein localises to the secreted. Weakly inhibits Kv11.1/KCNH2/ERG1, Kv1.2/KCNA2, Kv1.3/KCNA3, and Kv2.1/KCNB1. In Cyriopagopus hainanus (Chinese bird spider), this protein is U3-theraphotoxin-Hhn1n.